Reading from the N-terminus, the 835-residue chain is Transcription intermediary factor 1-beta (835 aa).

The segment covering 14–24 has biased composition (low complexity); the sequence is AATAASAASGS. Residues 14–57 form a disordered region; it reads AATAASAASGSPGSGEGSAGGEKRPAASSAAAASASASSPAGGG. A phosphoserine mark is found at serine 24, serine 27, and serine 31. Residue lysine 36 forms a Glycyl lysine isopeptide (Lys-Gly) (interchain with G-Cter in SUMO2) linkage. A compositionally biased stretch (low complexity) spans 39-53; the sequence is AASSAAAASASASSP. A Phosphoserine modification is found at serine 52. The segment at 67–123 adopts an RING-type zinc-finger fold; it reads CGVCRERLRPERDPRLLPCLHSACSACLGPATPAAANNSGDGGSAGDGAMVDCPVCK. Lysine 129 participates in a covalent cross-link: Glycyl lysine isopeptide (Lys-Gly) (interchain with G-Cter in SUMO2). Phosphoserine is present on serine 140. The B box-type 1; atypical zinc-finger motif lies at 150–197; that stretch reads DANQCCTSCEDNAPATSYCVECSEPLCETCVEAHQRVKYTKDHTVRST. Zn(2+)-binding residues include cysteine 155, cysteine 158, cysteine 179, and histidine 183. Residue lysine 201 forms a Glycyl lysine isopeptide (Lys-Gly) (interchain with G-Cter in SUMO2) linkage. Residues 206–247 form a B box-type 2 zinc finger; it reads ERTVYCNVHKHEPLVLFCESCDTLTCRDCQLNAHKDHQYQFL. 4 residues coordinate Zn(2+): cysteine 211, histidine 214, cysteine 234, and histidine 239. The segment at 248 to 378 is leucine zipper alpha helical coiled-coil region; it reads EDAVRNQRKL…LIYFQLHRAL (131 aa). Positions 249–378 are interaction with MAGEC2; it reads DAVRNQRKLL…LIYFQLHRAL (130 aa). Residues lysine 256 and lysine 263 each participate in a glycyl lysine isopeptide (Lys-Gly) (interchain with G-Cter in SUMO2) cross-link. Lysine 268 is modified (N6-acetyllysine). A Glycyl lysine isopeptide (Lys-Gly) (interchain with G-Cter in SUMO2) cross-link involves residue lysine 274. At lysine 306 the chain carries N6-acetyllysine; alternate. Lysine 306 participates in a covalent cross-link: Glycyl lysine isopeptide (Lys-Gly) (interchain with G-Cter in SUMO2); alternate. A Glycyl lysine isopeptide (Lys-Gly) (interchain with G-Cter in SUMO2) cross-link involves residue lysine 321. Lysine 342 carries the post-translational modification N6-acetyllysine. Residue lysine 368 forms a Glycyl lysine isopeptide (Lys-Gly) (interchain with G-Cter in SUMO2) linkage. An involved in binding PPP1CA region spans residues 368–372; it reads KLIYF. N6-acetyllysine; alternate is present on lysine 379. A Glycyl lysine isopeptide (Lys-Gly) (interchain with G-Cter in SUMO2); alternate cross-link involves residue lysine 379. Residue lysine 379 forms a Glycyl lysine isopeptide (Lys-Gly) (interchain with G-Cter in SUMO1); alternate linkage. A Glycyl lysine isopeptide (Lys-Gly) (interchain with G-Cter in SUMO2) cross-link involves residue lysine 409. The interval 413 to 481 is disordered; that stretch reads ERPGTNSTGP…SRSGEGEVSG (69 aa). Serine 419 carries the phosphoserine modification. Lysine 436 participates in a covalent cross-link: Glycyl lysine isopeptide (Lys-Gly) (interchain with G-Cter in SUMO2). The span at 436 to 445 shows a compositional bias: polar residues; it reads KQGSGSSQPM. A phosphoserine mark is found at serine 439 and serine 441. Residue lysine 470 forms a Glycyl lysine isopeptide (Lys-Gly) (interchain with G-Cter in SUMO2); alternate linkage. Residue lysine 470 forms a Glycyl lysine isopeptide (Lys-Gly) (interchain with G-Cter in SUMO1); alternate linkage. The residue at position 471 (arginine 471) is a Citrulline. Residue serine 472 is modified to Phosphoserine. A Citrulline modification is found at arginine 473. A phosphoserine mark is found at serine 474, serine 480, and serine 490. The interval 477–514 is HP1 box; it reads GEVSGLMRKVPRVSLERLDLDLTSDSQPPVFKVFPGST. The PxVxL motif signature appears at 482–495; the sequence is LMRKVPRVSLERLD. The residue at position 499 (threonine 499) is a Phosphothreonine. Serine 502 is subject to Phosphoserine. Lysine 508 is covalently cross-linked (Glycyl lysine isopeptide (Lys-Gly) (interchain with G-Cter in SUMO2)). Lysine 555 participates in a covalent cross-link: Glycyl lysine isopeptide (Lys-Gly) (interchain with G-Cter in SUMO2); alternate. Lysine 555 participates in a covalent cross-link: Glycyl lysine isopeptide (Lys-Gly) (interchain with G-Cter in SUMO); alternate. Lysine 576 is covalently cross-linked (Glycyl lysine isopeptide (Lys-Gly) (interchain with G-Cter in SUMO2)). Serine 595 carries the phosphoserine modification. Residues 626–673 form a PHD-type zinc finger; it reads ATICRVCQKPGDLVMCNQCEFCFHLDCHLPSLQDVPGEEWSCSLCHVL. Residue lysine 677 forms a Glycyl lysine isopeptide (Lys-Gly) (interchain with G-Cter in SUMO) linkage. Serine 684, serine 690, and serine 698 each carry phosphoserine. Residues 696 to 800 enclose the Bromo domain; that stretch reads KLSPANQRKC…RFFETRMNDA (105 aa). A Glycyl lysine isopeptide (Lys-Gly) (interchain with G-Cter in SUMO2); alternate cross-link involves residue lysine 751. A Glycyl lysine isopeptide (Lys-Gly) (interchain with G-Cter in SUMO1); alternate cross-link involves residue lysine 751. A Glycyl lysine isopeptide (Lys-Gly) (interchain with G-Cter in SUMO); alternate cross-link involves residue lysine 751. Serine 753 is modified (phosphoserine). At tyrosine 756 the chain carries Phosphotyrosine. Serine 758 is subject to Phosphoserine. An N6-acetyllysine; alternate mark is found at lysine 771, lysine 775, and lysine 780. Glycyl lysine isopeptide (Lys-Gly) (interchain with G-Cter in SUMO2); alternate cross-links involve residues lysine 771, lysine 775, and lysine 780. Lysine 780 is covalently cross-linked (Glycyl lysine isopeptide (Lys-Gly) (interchain with G-Cter in SUMO1); alternate). Serine 785 is subject to Phosphoserine. Residue lysine 805 forms a Glycyl lysine isopeptide (Lys-Gly) (interchain with G-Cter in SUMO2) linkage. Serine 825 is modified (phosphoserine; by ATM and ATR and dsDNA kinase).

It belongs to the TRIM/RBCC family. Interacts with ZNF382. Interacts with SETX. Oligomer; the RBCC domain homotrimerizes and interacts with one molecule of KRAB to form the KRAB-KAP1 corepressor complex. Binding to a KRAB domain is an absolute requirement for silencing gene expression. Interacts with CEBPB and NR3C1. Interacts with a number of KRAB-ZFP proteins including ZNF10, ZFP53, ZFP68 and ZNF256. Interacts with NCOR1, NR3C1 and CHD3. Interacts with CEBPB (via the RING-type and PHD-type zinc fingers). Component of a ternary complex that includes TRIM28, a HP1 protein (CBX1, CBX3 OR CBX5), a KRAB domain-containing protein, and DNA. Interacts with CBX5 (via the PxVxL motif); the interaction occurs in interphase nuclei and competes for binding POGZ. Interacts with POGZ; the interaction competes for interaction with CBX5. Interacts with SETDB1; the interaction is enhanced by KAP1 sumoylation, stimulates SETDB1 histone methyltransferase activity and gene silencing. Interacts (via the PHD-type zinc finger) with UBE2I; the interaction is required for sumoylation and repressor activity. Component of the TRIM28/KAP1-ERBB4-MDM2 complex involved in connecting growth factor and DNA damage responses. Interacts directly with ERBB4; the interaction represses ERBB4-mediated transcription activity. Interacts with MDM2; the interaction contributes to p53/TP53 inactivation. Component of the TRIM28/KAP1-MDM2-p53/TP53; involved in regulating p53/TP53 stabilization and activity. Interacts (via the leucine zipper alpha helical coiled-coil) with E2F1 (central region); the interaction inhibits E2F1 acetylation and transcriptional activity. Interacts with PPP1CA; the interaction dephosphorylates TRIM28 at Ser-824 and forms a complex at the p21 promoter site. Interacts with PPP1CB; the interaction is weak but is increased on dephosphorylation at Ser-824. Interacts with SMARCAD1. Interacts with, and sumoylates IRF7. Interacts with MAGEC2. Part of a complex composed of TRIM28, HDAC1, HDAC2 and EHMT2. Interacts with AICDA. The large PER complex involved in the histone methylation is composed of at least PER2, CBX3, TRIM28, SUV39H1 and/or SUV39H2; CBX3 mediates the formation of the complex. Interacts with NR4A3; the interactions potentiates NR4A3 activity on NurRE promoter. Interacts (unphosphorylated or phosphorylated form) with ZBTB1 (via BTB domain). Probably part of a corepressor complex containing ZNF304, TRIM28, SETDB1 and DNMT1. Interacts with ATRX. Forms a complex with ATRX, SETDB1 and ZNF274. Interacts with ZFP568; the interaction mediates ZFP568 transcriptional repression activity. Interacts with RRP1B. Interacts with CRY1. Interacts with ZNF263; recruited to the SIX3 promoter along with other proteins involved in chromatin modification and transcriptional corepression where it contributes to transcriptional repression. Interacts with CYREN (via XLF motif). Interacts with TRIM17; this interaction prevents TRIM28 activity. Interacts with ZNF746. Interacts with PHF13. Interacts with ZNF354C. Interacts with ZNF432; the interaction is independent of PARP1. Post-translationally, ATM-induced phosphorylation on Ser-825 represses sumoylation leading to the de-repression of expression of a subset of genes involved in cell cycle control and apoptosis in response to genotoxic stress. Dephosphorylation by the phosphatases, PPP1CA and PP1CB forms, allows sumoylation and expression of TRIM28 target genes. In terms of processing, sumoylation/desumoylation events regulate TRIM28-mediated transcriptional repression. Sumoylation is required for interaction with CHD3 and SETDB1 and the corepressor activity. Represses and is repressed by Ser-824 phosphorylation. Enhances the TRIM28 corepressor activity, inhibiting transcriptional activity of a number of genes including GADD45A and CDKN1A/p21. Lys-555, Lys-780 and Lys-805 are the major sites of sumoylation. In response to Dox-induced DNA damage, enhanced phosphorylation on Ser-825 prevents sumoylation and allows de-repression of CDKN1A/p21. Auto-ubiquitinated; enhanced by MAGEA2 and MAGEC2. Post-translationally, citrullinated by PADI4. In terms of processing, ADP-ribosylated by SIRT6, promoting TRIM28/KAP1 interaction with CBX5, thereby contributing to the packaging of LINE-1 retrotransposon elements into transcriptionally repressive heterochromatin.

Its subcellular location is the nucleus. It catalyses the reaction S-ubiquitinyl-[E2 ubiquitin-conjugating enzyme]-L-cysteine + [acceptor protein]-L-lysine = [E2 ubiquitin-conjugating enzyme]-L-cysteine + N(6)-ubiquitinyl-[acceptor protein]-L-lysine.. Its pathway is protein modification; protein sumoylation. Its function is as follows. Nuclear corepressor for KRAB domain-containing zinc finger proteins (KRAB-ZFPs). Mediates gene silencing by recruiting CHD3, a subunit of the nucleosome remodeling and deacetylation (NuRD) complex, and SETDB1 (which specifically methylates histone H3 at 'Lys-9' (H3K9me)) to the promoter regions of KRAB target genes. Enhances transcriptional repression by coordinating the increase in H3K9me, the decrease in histone H3 'Lys-9 and 'Lys-14' acetylation (H3K9ac and H3K14ac, respectively) and the disposition of HP1 proteins to silence gene expression. Recruitment of SETDB1 induces heterochromatinization. May play a role as a coactivator for CEBPB and NR3C1 in the transcriptional activation of ORM1. Also a corepressor for ERBB4. Inhibits E2F1 activity by stimulating E2F1-HDAC1 complex formation and inhibiting E2F1 acetylation. May serve as a partial backup to prevent E2F1-mediated apoptosis in the absence of RB1. Important regulator of CDKN1A/p21(CIP1). Has E3 SUMO-protein ligase activity toward itself via its PHD-type zinc finger. Also specifically sumoylates IRF7, thereby inhibiting its transactivation activity. Ubiquitinates p53/TP53 leading to its proteasomal degradation; the function is enhanced by MAGEC2 and MAGEA2, and possibly MAGEA3 and MAGEA6. Mediates the nuclear localization of KOX1, ZNF268 and ZNF300 transcription factors. In association with isoform 2 of ZFP90, is required for the transcriptional repressor activity of FOXP3 and the suppressive function of regulatory T-cells (Treg). Probably forms a corepressor complex required for activated KRAS-mediated promoter hypermethylation and transcriptional silencing of tumor suppressor genes (TSGs) or other tumor-related genes in colorectal cancer (CRC) cells. Required to maintain a transcriptionally repressive state of genes in undifferentiated embryonic stem cells (ESCs). In ESCs, in collaboration with SETDB1, is also required for H3K9me3 and silencing of endogenous and introduced retroviruses in a DNA-methylation independent-pathway. Associates at promoter regions of tumor suppressor genes (TSGs) leading to their gene silencing. The SETDB1-TRIM28-ZNF274 complex may play a role in recruiting ATRX to the 3'-exons of zinc finger genes with atypical chromatin signatures to establish or maintain/protect H3K9me3 at these transcriptionally active regions. The protein is Transcription intermediary factor 1-beta of Rattus norvegicus (Rat).